The chain runs to 238 residues: uncharacterized protein (238 aa).

The protein belongs to the chlamydial CPn_0658/CT_538/TC_0825 family.

This is an uncharacterized protein from Chlamydia muridarum (strain MoPn / Nigg).